A 519-amino-acid chain; its full sequence is Probable DNA ligase (519 aa).

Glu221 contributes to the ATP binding site. Residue Lys223 is the N6-AMP-lysine intermediate of the active site. ATP-binding residues include Arg228, Arg243, Glu272, Phe312, Arg384, and Lys390.

Belongs to the ATP-dependent DNA ligase family. The cofactor is Mg(2+).

It carries out the reaction ATP + (deoxyribonucleotide)n-3'-hydroxyl + 5'-phospho-(deoxyribonucleotide)m = (deoxyribonucleotide)n+m + AMP + diphosphate.. In terms of biological role, DNA ligase that seals nicks in double-stranded DNA during DNA replication, DNA recombination and DNA repair. The protein is Probable DNA ligase of Mycolicibacterium paratuberculosis (strain ATCC BAA-968 / K-10) (Mycobacterium paratuberculosis).